The sequence spans 341 residues: MTEQQPVAVLGGGSFGTAVANLLAENGVPVRQWMRDPAQAEAMRVNRENPRYLKGIRLHDGVEPVNDLLATLQASELIFVALPSSALRSVLAPHAELLRGKALVSLTKGIEAQSFKLMSQILEEIAPEARIGVLSGPNLAREIAEHALTATVVASEHEDLCQQVQAVLHGRTFRVYASADRFGVELGGALKNVYAIIAGMAVALGMGENTKSMLITRALAEMTRFAVSQGANPMTFLGLAGVGDLIVTCSSPKSRNYQVGYALGQGQSLEEAVSRLGEVAEGVNTLKVLKTKAQQVQVYMPLVAGLHAILFEGRTLNQVIEHLMRAEPKTDVDFISISGFN.

Residues Ser14, Phe15, Arg35, and Lys108 each coordinate NADPH. The sn-glycerol 3-phosphate site is built by Lys108 and Gly136. Ala140 lines the NADPH pocket. Sn-glycerol 3-phosphate is bound by residues Lys191, Asp244, Ser254, Arg255, and Asn256. Lys191 functions as the Proton acceptor in the catalytic mechanism. Residue Arg255 coordinates NADPH. Positions 279 and 281 each coordinate NADPH.

This sequence belongs to the NAD-dependent glycerol-3-phosphate dehydrogenase family.

It is found in the cytoplasm. The enzyme catalyses sn-glycerol 3-phosphate + NAD(+) = dihydroxyacetone phosphate + NADH + H(+). It catalyses the reaction sn-glycerol 3-phosphate + NADP(+) = dihydroxyacetone phosphate + NADPH + H(+). The protein operates within membrane lipid metabolism; glycerophospholipid metabolism. Catalyzes the reduction of the glycolytic intermediate dihydroxyacetone phosphate (DHAP) to sn-glycerol 3-phosphate (G3P), the key precursor for phospholipid synthesis. The protein is Glycerol-3-phosphate dehydrogenase [NAD(P)+] of Pseudomonas putida (strain ATCC 700007 / DSM 6899 / JCM 31910 / BCRC 17059 / LMG 24140 / F1).